Here is a 348-residue protein sequence, read N- to C-terminus: Rhodopsin (348 aa).

The residue at position 1 (Met-1) is an N-acetylmethionine. Topologically, residues 1 to 36 (MNGTEGPNFYVPFSNATGVVRSPFEYPQYYLAEPWQ) are extracellular. 2 N-linked (GlcNAc...) asparagine glycosylation sites follow: Asn-2 and Asn-15. Residues 37-61 (FSMLAAYMFLLIVLGFPINFLTLYV) traverse the membrane as a helical segment. Residues 62–73 (TVQHKKLRTPLN) are Cytoplasmic-facing. Residues 74–96 (YILLNLAVADLFMVLGGFTSTLY) form a helical membrane-spanning segment. Residues 97 to 110 (TSLHGYFVFGPTGC) are Extracellular-facing. Cys-110 and Cys-187 form a disulfide bridge. The helical transmembrane segment at 111–133 (NLEGFFATLGGEIALWSLVVLAI) threads the bilayer. Residues 134–136 (ERY) carry the 'Ionic lock' involved in activated form stabilization motif. At 134–152 (ERYVVVCKPMSNFRFGENH) the chain is on the cytoplasmic side. Residues 153–173 (AIMGVAFTWVMALACAAPPLA) traverse the membrane as a helical segment. Over 174 to 202 (GWSRYIPEGLQCSCGIDYYTLKPEVNNES) the chain is Extracellular. Glu-201 lines the Zn(2+) pocket. A helical membrane pass occupies residues 203-224 (FVIYMFVVHFTIPMIIIFFCYG). Residues 225 to 252 (QLVFTVKEAAAQQQESATTQKAEKEVTR) are Cytoplasmic-facing. Residues 253–274 (MVIIMVIAFLICWVPYASVAFY) form a helical membrane-spanning segment. Over 275–284 (IFTHQGSNFG) the chain is Extracellular. Gln-279 serves as a coordination point for Zn(2+). Residues 285–309 (PIFMTIPAFFAKSAAIYNPVIYIMM) traverse the membrane as a helical segment. An N6-(retinylidene)lysine modification is found at Lys-296. The Cytoplasmic portion of the chain corresponds to 310 to 348 (NKQFRNCMLTTICCGKNPLGDDEASATVSKTETSQVAPA). 2 S-palmitoyl cysteine lipidation sites follow: Cys-322 and Cys-323. An interaction with SAG region spans residues 330-348 (DDEASATVSKTETSQVAPA). Position 334 is a phosphoserine (Ser-334). Thr-336 carries the post-translational modification Phosphothreonine. Ser-338 bears the Phosphoserine mark. Phosphothreonine occurs at positions 340 and 342. A Phosphoserine modification is found at Ser-343.

Belongs to the G-protein coupled receptor 1 family. Opsin subfamily. Homodimer. May form a complex composed of RHO, GRK1 and RCVRN in a Ca(2+)-dependent manner; RCVRN prevents the interaction between GRK1 and RHO. Interacts with GRK1. Interacts (phosphorylated form) with SAG. Interacts with GNAT1. Interacts with GNAT3. SAG and G-proteins compete for a common binding site. Interacts with PRCD; the interaction promotes PRCD stability. Forms a complex with ASAP1 and ARF4. Forms a complex with ASAP1, RAB11A, Rabin8/RAB3IP, ARF4 and RAB11FIP3; the complex regulates Golgi-to-cilia rhodopsin/RHO transport in photoreceptors. Phosphorylated on some or all of the serine and threonine residues present in the C-terminal region. After activation by light, phosphorylated by GRK1 (in vitro). Post-translationally, contains one covalently linked retinal chromophore. Upon light absorption, the covalently bound 11-cis-retinal is converted to all-trans-retinal. After hydrolysis of the Schiff base and release of the covalently bound all-trans-retinal, active rhodopsin is regenerated by binding of a fresh molecule of 11-cis-retinal. As to expression, rod shaped photoreceptor cells which mediate vision in dim light.

Its subcellular location is the membrane. The protein resides in the cell projection. It is found in the cilium. It localises to the photoreceptor outer segment. In terms of biological role, photoreceptor required for image-forming vision at low light intensity. Required for photoreceptor cell viability after birth. Light-induced isomerization of the chromophore 11-cis-retinal to all-trans-retinal triggers a conformational change that activates signaling via G-proteins. Subsequent receptor phosphorylation mediates displacement of the bound G-protein alpha subunit by the arrestin SAG and terminates signaling. In Homo sapiens (Human), this protein is Rhodopsin (RHO).